Here is a 310-residue protein sequence, read N- to C-terminus: Glutarate 2-hydroxylase (310 aa).

Residues histidine 160, aspartate 162, and histidine 277 each contribute to the Fe cation site.

It belongs to the glutarate hydroxylase family. In terms of assembly, homotetramer. Fe(2+) serves as cofactor.

It catalyses the reaction glutarate + 2-oxoglutarate + O2 = (S)-2-hydroxyglutarate + succinate + CO2. It functions in the pathway amino-acid degradation. Its function is as follows. Acts as an alpha-ketoglutarate-dependent dioxygenase catalyzing hydroxylation of glutarate (GA) to L-2-hydroxyglutarate (L2HG). Functions in a L-lysine degradation pathway that proceeds via cadaverine, glutarate and L-2-hydroxyglutarate. The chain is Glutarate 2-hydroxylase from Shigella flexneri.